Reading from the N-terminus, the 398-residue chain is Succinate--CoA ligase [ADP-forming] subunit beta (398 aa).

The 246-residue stretch at 9 to 254 (KALLKSFGAP…KTEEDAKEIE (246 aa)) folds into the ATP-grasp domain. ATP is bound by residues Lys-46, 53-55 (GRG), Glu-109, Ala-112, and Glu-117. 2 residues coordinate Mg(2+): Asn-209 and Asp-223. Residues Asn-274 and 331–333 (GIM) contribute to the substrate site.

The protein belongs to the succinate/malate CoA ligase beta subunit family. As to quaternary structure, heterotetramer of two alpha and two beta subunits. Requires Mg(2+) as cofactor.

The enzyme catalyses succinate + ATP + CoA = succinyl-CoA + ADP + phosphate. It catalyses the reaction GTP + succinate + CoA = succinyl-CoA + GDP + phosphate. It functions in the pathway carbohydrate metabolism; tricarboxylic acid cycle; succinate from succinyl-CoA (ligase route): step 1/1. Functionally, succinyl-CoA synthetase functions in the citric acid cycle (TCA), coupling the hydrolysis of succinyl-CoA to the synthesis of either ATP or GTP and thus represents the only step of substrate-level phosphorylation in the TCA. The beta subunit provides nucleotide specificity of the enzyme and binds the substrate succinate, while the binding sites for coenzyme A and phosphate are found in the alpha subunit. The protein is Succinate--CoA ligase [ADP-forming] subunit beta of Allorhizobium ampelinum (strain ATCC BAA-846 / DSM 112012 / S4) (Agrobacterium vitis (strain S4)).